A 513-amino-acid chain; its full sequence is Gluconokinase (513 aa).

Residues K16, T261, G300, and 412–416 (GFARS) each bind ATP.

It belongs to the FGGY kinase family.

It carries out the reaction D-gluconate + ATP = 6-phospho-D-gluconate + ADP + H(+). The protein operates within carbohydrate acid metabolism; D-gluconate degradation. With respect to regulation, catabolite repression by gluconate. In Bacillus licheniformis, this protein is Gluconokinase (gntK).